A 208-amino-acid chain; its full sequence is Type 4 adapter protein LvgA (208 aa).

The T4BSS is a complex nanomachine composed of several subcomplexes. This subunit is part of the Type IV Coupling Complex (T4CC), a subcomplex composed of the DotLMNYZ core and the IcmSW-LvgA adapter subunits, linked by the C-terminal tail of DotL. Interacts with DotL, IcmS and IcmW. Interacts with various effector proteins, including VpdB, SetA, PieA and SidH.

Its subcellular location is the cytoplasm. In terms of biological role, component of the Dot/Icm type IVB secretion system (T4BSS), which is used to inject bacterial effector proteins into eukaryotic host cells. Part of a subcomplex which recruits effector proteins and delivers them to the core transmembrane subcomplex. Is a critical subunit for binding a subset of effector proteins. Recognizes more than one type of binding motif. May be a critical factor that confers host specificity. This chain is Type 4 adapter protein LvgA, found in Legionella pneumophila subsp. pneumophila (strain Philadelphia 1 / ATCC 33152 / DSM 7513).